A 411-amino-acid polypeptide reads, in one-letter code: Peptidase T (411 aa).

Residue H78 participates in Zn(2+) binding. Residue D80 is part of the active site. Position 140 (D140) interacts with Zn(2+). Residue E173 is the Proton acceptor of the active site. Zn(2+) contacts are provided by E174, D196, and H379.

This sequence belongs to the peptidase M20B family. The cofactor is Zn(2+).

The protein resides in the cytoplasm. It carries out the reaction Release of the N-terminal residue from a tripeptide.. Functionally, cleaves the N-terminal amino acid of tripeptides. This chain is Peptidase T, found in Yersinia pseudotuberculosis serotype O:1b (strain IP 31758).